Consider the following 215-residue polypeptide: Adenylate kinase (215 aa).

10-15 (GAGKGT) contacts ATP. An NMP region spans residues 30–59 (STGDMLREAVAAGTELGKKVKEIIEKGLLV). AMP contacts are provided by residues threonine 31, arginine 36, 57–59 (LLV), 85–88 (GFPR), and glutamine 92. The interval 126 to 163 (SRRVCPSCGKVYNLLTIKPKNDMLCDDCNIGLIQREDD) is LID. Arginine 127 lines the ATP pocket. The Zn(2+) site is built by cysteine 130 and cysteine 133. An ATP-binding site is contributed by 136–137 (VY). The Zn(2+) site is built by cysteine 150 and cysteine 153. The AMP site is built by arginine 160 and arginine 171. ATP is bound at residue leucine 199.

This sequence belongs to the adenylate kinase family. As to quaternary structure, monomer.

It localises to the cytoplasm. It catalyses the reaction AMP + ATP = 2 ADP. The protein operates within purine metabolism; AMP biosynthesis via salvage pathway; AMP from ADP: step 1/1. In terms of biological role, catalyzes the reversible transfer of the terminal phosphate group between ATP and AMP. Plays an important role in cellular energy homeostasis and in adenine nucleotide metabolism. The polypeptide is Adenylate kinase (Kosmotoga olearia (strain ATCC BAA-1733 / DSM 21960 / TBF 19.5.1)).